Reading from the N-terminus, the 526-residue chain is Ferrochelatase-2, chloroplastic (526 aa).

Belongs to the ferrochelatase family.

The protein resides in the plastid. It localises to the chloroplast. The enzyme catalyses heme b + 2 H(+) = protoporphyrin IX + Fe(2+). The protein operates within porphyrin-containing compound metabolism; protoheme biosynthesis; protoheme from protoporphyrin-IX: step 1/1. Catalyzes the ferrous insertion into protoporphyrin IX. In Oryza sativa subsp. japonica (Rice), this protein is Ferrochelatase-2, chloroplastic.